Here is a 139-residue protein sequence, read N- to C-terminus: Iron-sulfur cluster assembly 1 homolog, mitochondrial (139 aa).

Cysteine 52, cysteine 117, and cysteine 119 together coordinate Fe cation.

This sequence belongs to the HesB/IscA family.

The protein localises to the mitochondrion. Its function is as follows. Involved in the assembly of mitochondrial iron-sulfur proteins. Probably involved in the binding of an intermediate of Fe/S cluster assembly. This chain is Iron-sulfur cluster assembly 1 homolog, mitochondrial (isca1), found in Dictyostelium discoideum (Social amoeba).